We begin with the raw amino-acid sequence, 205 residues long: Microtubule-associated protein Jupiter (205 aa).

Position 30 is a phosphoserine (Ser-30). Thr-41, Thr-98, and Thr-102 each carry phosphothreonine. Polar residues predominate over residues 124 to 135 (LISNSKGNYNGK). A disordered region spans residues 124–205 (LISNSKGNYN…PPGGYSSGLW (82 aa)). The span at 136–149 (SGSVSSASSSVSSS) shows a compositional bias: low complexity. Residues Ser-138 and Ser-149 each carry the phosphoserine modification. Residues 181–191 (PANNGSSQVIN) show a composition bias toward polar residues.

It belongs to the MAP Jupiter family.

Its subcellular location is the nucleus. It is found in the cytoplasm. It localises to the cytoskeleton. The protein localises to the spindle. Binds to all microtubule populations. This Drosophila virilis (Fruit fly) protein is Microtubule-associated protein Jupiter.